The primary structure comprises 218 residues: MGQKINPLGFRLGTTQSHHSLWFAQPKKYSEGLEEDKKIRDCIKNYVQKNIRISSGMEGIARIEIQKRIDLIQIIIYMGFPKLLIEDKPRRVEELRMNVQKELNCVNRKLNIAITRISNPYGDPNILAEFIAGQLKNRVSFRKAMKKAIELTEQANTKGIQVQIAGRIDGKEIARVEWIREGRVPLQTIEAKIDYCSYTVRTIYGVLGIKIWIFVDEA.

Residues 47–118 (VQKNIRISSG…KLNIAITRIS (72 aa)) enclose the KH type-2 domain.

It belongs to the universal ribosomal protein uS3 family. Part of the 30S ribosomal subunit.

Its subcellular location is the plastid. It localises to the chloroplast. This Barbarea verna (Land cress) protein is Small ribosomal subunit protein uS3c (rps3).